The sequence spans 91 residues: PqqA binding protein (91 aa).

This sequence belongs to the PqqD family. In terms of assembly, monomer. Interacts with PqqE.

Its pathway is cofactor biosynthesis; pyrroloquinoline quinone biosynthesis. Its function is as follows. Functions as a PqqA binding protein and presents PqqA to PqqE, in the pyrroloquinoline quinone (PQQ) biosynthetic pathway. The polypeptide is PqqA binding protein (Pseudomonas fluorescens (strain Pf0-1)).